The chain runs to 484 residues: Aspartyl aminopeptidase (484 aa).

Methionine 1 carries the N-acetylmethionine modification. Zn(2+) is bound at residue histidine 84. Histidine 159 is a binding site for substrate. Low complexity predominate over residues 188-206; sequence PVESKSTTTTTTTESPKTS. The segment at 188–213 is disordered; sequence PVESKSTTTTTTTESPKTSDPQDVNS. Aspartate 266 contributes to the Zn(2+) binding site. Glutamate 301 provides a ligand contact to substrate. Zn(2+) contacts are provided by glutamate 302 and aspartate 354. Substrate contacts are provided by aspartate 354, histidine 357, lysine 382, and tyrosine 389. Histidine 448 contributes to the Zn(2+) binding site.

Belongs to the peptidase M18 family. Tetrahedron-shaped homododecamer built from six homodimers. Zn(2+) is required as a cofactor.

It is found in the cytoplasm. The catalysed reaction is Release of an N-terminal aspartate or glutamate from a peptide, with a preference for aspartate.. In terms of biological role, likely to play an important role in intracellular protein and peptide metabolism. This is Aspartyl aminopeptidase (dnpep) from Dictyostelium discoideum (Social amoeba).